Here is a 394-residue protein sequence, read N- to C-terminus: S-adenosylmethionine synthase (394 aa).

Residue Glu-10 coordinates Mg(2+). His-16 is an ATP binding site. Glu-44 contacts K(+). Positions 57 and 100 each coordinate L-methionine. ATP contacts are provided by residues 168–170 (DGK), 236–239 (SGRF), Asp-247, 253–254 (RK), Ala-270, Lys-274, and Lys-278. Asp-247 serves as a coordination point for L-methionine. Lys-278 contacts L-methionine.

This sequence belongs to the AdoMet synthase family. As to quaternary structure, homotetramer. Mn(2+) is required as a cofactor. Requires Mg(2+) as cofactor. Co(2+) serves as cofactor. The cofactor is K(+).

It localises to the cytoplasm. The enzyme catalyses L-methionine + ATP + H2O = S-adenosyl-L-methionine + phosphate + diphosphate. It functions in the pathway amino-acid biosynthesis; S-adenosyl-L-methionine biosynthesis; S-adenosyl-L-methionine from L-methionine: step 1/1. Catalyzes the formation of S-adenosylmethionine from methionine and ATP. The reaction comprises two steps that are both catalyzed by the same enzyme: formation of S-adenosylmethionine (AdoMet) and triphosphate, and subsequent hydrolysis of the triphosphate. In Medicago truncatula (Barrel medic), this protein is S-adenosylmethionine synthase (METK).